The sequence spans 279 residues: Ribosomal RNA small subunit methyltransferase A (279 aa).

Asn-27, Leu-29, Gly-54, Glu-76, Asp-102, and Asn-127 together coordinate S-adenosyl-L-methionine.

It belongs to the class I-like SAM-binding methyltransferase superfamily. rRNA adenine N(6)-methyltransferase family. RsmA subfamily.

It is found in the cytoplasm. The catalysed reaction is adenosine(1518)/adenosine(1519) in 16S rRNA + 4 S-adenosyl-L-methionine = N(6)-dimethyladenosine(1518)/N(6)-dimethyladenosine(1519) in 16S rRNA + 4 S-adenosyl-L-homocysteine + 4 H(+). Its function is as follows. Specifically dimethylates two adjacent adenosines (A1518 and A1519) in the loop of a conserved hairpin near the 3'-end of 16S rRNA in the 30S particle. May play a critical role in biogenesis of 30S subunits. The polypeptide is Ribosomal RNA small subunit methyltransferase A (Mesorhizobium japonicum (strain LMG 29417 / CECT 9101 / MAFF 303099) (Mesorhizobium loti (strain MAFF 303099))).